A 229-amino-acid polypeptide reads, in one-letter code: Enolase-phosphatase E1 (229 aa).

This sequence belongs to the HAD-like hydrolase superfamily. MasA/MtnC family. As to quaternary structure, monomer. The cofactor is Mg(2+).

The enzyme catalyses 5-methylsulfanyl-2,3-dioxopentyl phosphate + H2O = 1,2-dihydroxy-5-(methylsulfanyl)pent-1-en-3-one + phosphate. It functions in the pathway amino-acid biosynthesis; L-methionine biosynthesis via salvage pathway; L-methionine from S-methyl-5-thio-alpha-D-ribose 1-phosphate: step 3/6. The protein operates within amino-acid biosynthesis; L-methionine biosynthesis via salvage pathway; L-methionine from S-methyl-5-thio-alpha-D-ribose 1-phosphate: step 4/6. Its function is as follows. Bifunctional enzyme that catalyzes the enolization of 2,3-diketo-5-methylthiopentyl-1-phosphate (DK-MTP-1-P) into the intermediate 2-hydroxy-3-keto-5-methylthiopentenyl-1-phosphate (HK-MTPenyl-1-P), which is then dephosphorylated to form the acireductone 1,2-dihydroxy-3-keto-5-methylthiopentene (DHK-MTPene). This Yersinia pestis (strain Pestoides F) protein is Enolase-phosphatase E1.